The sequence spans 528 residues: Sulfhydryl oxidase 1 (528 aa).

The N-terminal stretch at 1 to 19 is a signal peptide; it reads MSLIHLFLLLGLLSLEAAA. In terms of domain architecture, Thioredoxin spans 35–170; that stretch reads NVADQKDNAI…LLNWINKQIG (136 aa). Residue Asn47 is glycosylated (N-linked (GlcNAc...) asparagine). Catalysis depends on nucleophile residues Cys72 and Cys75. Cysteines 72 and 75 form a disulfide. 2 N-linked (GlcNAc...) asparagine glycosylation sites follow: Asn186 and Asn297. An intrachain disulfide couples Cys292 to Cys304. The 103-residue stretch at 295–397 folds into the ERV/ALR sulfhydryl oxidase domain; it reads SKNETRGFSC…GDPKFPKMIW (103 aa). FAD is bound by residues Arg300, Trp307, His311, Asp341, His345, 368 to 375, Lys394, and Trp397; that span reads WSTHNKVN. A disulfide bridge connects residues Cys339 and Cys342. Cys403 and Cys406 form a disulfide bridge.

FAD serves as cofactor. Highly expressed in roots.

It localises to the secreted. The protein localises to the cell wall. The catalysed reaction is 2 R'C(R)SH + O2 = R'C(R)S-S(R)CR' + H2O2. Functionally, sulfhydryl oxidase involved in the regulation of cation homeostasis. Positively regulates shoot accumulation of K(+) and inhibits accumulation of toxic cations. Acts at the level of root K(+) efflux systems involved in xylem loading (root symplast-xylem interface). The protein is Sulfhydryl oxidase 1 (QSOX1) of Arabidopsis thaliana (Mouse-ear cress).